Here is an 88-residue protein sequence, read N- to C-terminus: MANIKSAKKRIKVIETKTLRNKMLKSSLKTTIKNFLTVVEGKNVEEAKAAYKTAARALDMSVSKGIVHKNKAARTKSRLAAKLNALNA.

Belongs to the bacterial ribosomal protein bS20 family.

Binds directly to 16S ribosomal RNA. In Clostridium botulinum (strain ATCC 19397 / Type A), this protein is Small ribosomal subunit protein bS20.